The primary structure comprises 213 residues: Nucleoside triphosphate pyrophosphatase (213 aa).

D77 (proton acceptor) is an active-site residue.

The protein belongs to the Maf family. It depends on a divalent metal cation as a cofactor.

Its subcellular location is the cytoplasm. The enzyme catalyses a ribonucleoside 5'-triphosphate + H2O = a ribonucleoside 5'-phosphate + diphosphate + H(+). It catalyses the reaction a 2'-deoxyribonucleoside 5'-triphosphate + H2O = a 2'-deoxyribonucleoside 5'-phosphate + diphosphate + H(+). Functionally, nucleoside triphosphate pyrophosphatase. May have a dual role in cell division arrest and in preventing the incorporation of modified nucleotides into cellular nucleic acids. The chain is Nucleoside triphosphate pyrophosphatase from Cutibacterium acnes (strain DSM 16379 / KPA171202) (Propionibacterium acnes).